A 55-amino-acid chain; its full sequence is ATP synthase F(0) complex subunit 8 (55 aa).

The helical transmembrane segment at 9–29 (WFAIMVFSWFVFLIFLPPKIM) threads the bilayer.

The protein belongs to the ATPase protein 8 family. As to quaternary structure, component of the ATP synthase complex composed at least of ATP5F1A/subunit alpha, ATP5F1B/subunit beta, ATP5MC1/subunit c (homooctomer), MT-ATP6/subunit a, MT-ATP8/subunit 8, ATP5ME/subunit e, ATP5MF/subunit f, ATP5MG/subunit g, ATP5MK/subunit k, ATP5MJ/subunit j, ATP5F1C/subunit gamma, ATP5F1D/subunit delta, ATP5F1E/subunit epsilon, ATP5PF/subunit F6, ATP5PB/subunit b, ATP5PD/subunit d, ATP5PO/subunit OSCP. ATP synthase complex consists of a soluble F(1) head domain (subunits alpha(3) and beta(3)) - the catalytic core - and a membrane F(0) domain - the membrane proton channel (subunits c, a, 8, e, f, g, k and j). These two domains are linked by a central stalk (subunits gamma, delta, and epsilon) rotating inside the F1 region and a stationary peripheral stalk (subunits F6, b, d, and OSCP).

It is found in the mitochondrion membrane. Functionally, subunit 8, of the mitochondrial membrane ATP synthase complex (F(1)F(0) ATP synthase or Complex V) that produces ATP from ADP in the presence of a proton gradient across the membrane which is generated by electron transport complexes of the respiratory chain. ATP synthase complex consist of a soluble F(1) head domain - the catalytic core - and a membrane F(1) domain - the membrane proton channel. These two domains are linked by a central stalk rotating inside the F(1) region and a stationary peripheral stalk. During catalysis, ATP synthesis in the catalytic domain of F(1) is coupled via a rotary mechanism of the central stalk subunits to proton translocation. In vivo, can only synthesize ATP although its ATP hydrolase activity can be activated artificially in vitro. Part of the complex F(0) domain. The chain is ATP synthase F(0) complex subunit 8 from Tetraodon nigroviridis (Spotted green pufferfish).